We begin with the raw amino-acid sequence, 137 residues long: Structural protein A137R (137 aa).

Belongs to the asfivirus A137R family. Interacts with host TBK1.

The protein localises to the virion. It localises to the host cytoplasm. Its function is as follows. Plays a role in the inhibition of the host innate immune response. Mechanistically, promotes the autophagy-mediated lysosomal degradation of host TBK1 and affects IRF3 nuclear translocation to block type I IFN production. The sequence is that of Structural protein A137R from Ornithodoros (relapsing fever ticks).